The sequence spans 84 residues: Acyl carrier protein homolog (84 aa).

The 76-residue stretch at 4 to 79 folds into the Carrier domain; sequence HEILLKIKEI…DLVLEVKNLL (76 aa). Ser39 is subject to O-(pantetheine 4'-phosphoryl)serine.

In terms of processing, 4'-phosphopantetheine is transferred from CoA to a specific serine of the apo-ACP-like protein.

It functions in the pathway lipid metabolism; fatty acid biosynthesis. Its function is as follows. Carrier of the growing fatty acid chain in fatty acid biosynthesis. In Mycoplasma genitalium (strain ATCC 33530 / DSM 19775 / NCTC 10195 / G37) (Mycoplasmoides genitalium), this protein is Acyl carrier protein homolog.